The chain runs to 316 residues: Ferrochelatase (316 aa).

2 residues coordinate Fe cation: H186 and E268.

This sequence belongs to the ferrochelatase family.

The protein resides in the cytoplasm. The enzyme catalyses heme b + 2 H(+) = protoporphyrin IX + Fe(2+). The protein operates within porphyrin-containing compound metabolism; protoheme biosynthesis; protoheme from protoporphyrin-IX: step 1/1. Functionally, catalyzes the ferrous insertion into protoporphyrin IX. The polypeptide is Ferrochelatase (Deinococcus radiodurans (strain ATCC 13939 / DSM 20539 / JCM 16871 / CCUG 27074 / LMG 4051 / NBRC 15346 / NCIMB 9279 / VKM B-1422 / R1)).